We begin with the raw amino-acid sequence, 245 residues long: MTLTASSSSRAVTNSPVVVALDYHNRDDALSFVDKIDPRDCRLKVGKEMFTLFGPQFVRELQQRGFDIFLDLKFHDIPNTAAHAVAAAADLGVWMVNVHASGGARMMTAAREALVPFGKDAPLLIAVTVLTSMEASDLADLGVTLSPADYAERLAALTQKCGLDGVVCSAQEAVRFKQVFGQEFKLVTPGIRPQGSDAGDQRRIMTPEQALAAGVDYMAIGRPVTQSVDPAQTLKAINASLQRSA.

Substrate contacts are provided by residues Asp22, Lys44, 71 to 80, Thr131, Arg192, Gln201, Gly221, and Arg222; that span reads DLKFHDIPNT. Residue Lys73 is the Proton donor of the active site.

Belongs to the OMP decarboxylase family. Type 1 subfamily. Homodimer.

It carries out the reaction orotidine 5'-phosphate + H(+) = UMP + CO2. The protein operates within pyrimidine metabolism; UMP biosynthesis via de novo pathway; UMP from orotate: step 2/2. Functionally, catalyzes the decarboxylation of orotidine 5'-monophosphate (OMP) to uridine 5'-monophosphate (UMP). This is Orotidine 5'-phosphate decarboxylase from Shigella boydii serotype 18 (strain CDC 3083-94 / BS512).